An 86-amino-acid chain; its full sequence is Small ribosomal subunit protein bS20 (86 aa).

The protein belongs to the bacterial ribosomal protein bS20 family.

Its function is as follows. Binds directly to 16S ribosomal RNA. This chain is Small ribosomal subunit protein bS20, found in Rhodococcus erythropolis (strain PR4 / NBRC 100887).